We begin with the raw amino-acid sequence, 698 residues long: Elongation factor G (698 aa).

The tr-type G domain occupies 8 to 290; the sequence is ERYRNIGISA…AVIEFLPSPV (283 aa). Residues 17-24, 88-92, and 142-145 contribute to the GTP site; these read AHIDAGKT, DTPGH, and NKMD.

This sequence belongs to the TRAFAC class translation factor GTPase superfamily. Classic translation factor GTPase family. EF-G/EF-2 subfamily.

It localises to the cytoplasm. In terms of biological role, catalyzes the GTP-dependent ribosomal translocation step during translation elongation. During this step, the ribosome changes from the pre-translocational (PRE) to the post-translocational (POST) state as the newly formed A-site-bound peptidyl-tRNA and P-site-bound deacylated tRNA move to the P and E sites, respectively. Catalyzes the coordinated movement of the two tRNA molecules, the mRNA and conformational changes in the ribosome. This Azoarcus sp. (strain BH72) protein is Elongation factor G.